Here is a 645-residue protein sequence, read N- to C-terminus: Threonine--tRNA ligase (645 aa).

The region spanning 1-61 (MPAITLPDGS…SSDASVKFIT (61 aa)) is the TGS domain. The segment at 243 to 536 (DHRRIGREMD…LIEQYAGKFP (294 aa)) is catalytic. Zn(2+)-binding residues include cysteine 336, histidine 387, and histidine 513.

It belongs to the class-II aminoacyl-tRNA synthetase family. As to quaternary structure, homodimer. Zn(2+) is required as a cofactor.

It is found in the cytoplasm. It catalyses the reaction tRNA(Thr) + L-threonine + ATP = L-threonyl-tRNA(Thr) + AMP + diphosphate + H(+). Functionally, catalyzes the attachment of threonine to tRNA(Thr) in a two-step reaction: L-threonine is first activated by ATP to form Thr-AMP and then transferred to the acceptor end of tRNA(Thr). Also edits incorrectly charged L-seryl-tRNA(Thr). The protein is Threonine--tRNA ligase of Gluconobacter oxydans (strain 621H) (Gluconobacter suboxydans).